Here is a 185-residue protein sequence, read N- to C-terminus: Potassium-transporting ATPase KdpC subunit (185 aa).

A helical transmembrane segment spans residues 11–31 (LALLMTLVTGALYPLAVTGIA).

It belongs to the KdpC family. In terms of assembly, the system is composed of three essential subunits: KdpA, KdpB and KdpC.

The protein localises to the cell inner membrane. Its function is as follows. Part of the high-affinity ATP-driven potassium transport (or Kdp) system, which catalyzes the hydrolysis of ATP coupled with the electrogenic transport of potassium into the cytoplasm. This subunit acts as a catalytic chaperone that increases the ATP-binding affinity of the ATP-hydrolyzing subunit KdpB by the formation of a transient KdpB/KdpC/ATP ternary complex. This chain is Potassium-transporting ATPase KdpC subunit, found in Pseudomonas putida (strain ATCC 47054 / DSM 6125 / CFBP 8728 / NCIMB 11950 / KT2440).